Reading from the N-terminus, the 194-residue chain is PPE family protein PPE41 (194 aa).

Belongs to the mycobacterial PPE family. In terms of assembly, forms a heterodimer with PE25. The dimer forms a 1:1:1 heterotrimeric complex with EspG5. PPE41 interacts directly with EspG5.

The protein localises to the secreted. Its subcellular location is the cell surface. The PE25/PPE41 dimer induces both a strong humoral and cellular immune response. The dimer induces necrosis, but not apoptosis, in mouse macrophage cells. It also induces activation and maturation of mouse dendritic cells and drives Th2-biased immune responses. The polypeptide is PPE family protein PPE41 (Mycobacterium tuberculosis (strain ATCC 25618 / H37Rv)).